The following is a 336-amino-acid chain: Ferredoxin--NADP reductase (336 aa).

Positions 37, 45, 50, 90, 124, 286, and 327 each coordinate FAD.

Belongs to the ferredoxin--NADP reductase type 2 family. In terms of assembly, homodimer. FAD is required as a cofactor.

The catalysed reaction is 2 reduced [2Fe-2S]-[ferredoxin] + NADP(+) + H(+) = 2 oxidized [2Fe-2S]-[ferredoxin] + NADPH. The polypeptide is Ferredoxin--NADP reductase (Enterococcus faecalis (strain ATCC 700802 / V583)).